A 631-amino-acid polypeptide reads, in one-letter code: Phosphomethylpyrimidine synthase (631 aa).

Residues N239, M268, Y297, H333, 353–355 (SRG), 394–397 (DGLR), and E433 contribute to the substrate site. H437 provides a ligand contact to Zn(2+). Y460 is a binding site for substrate. H501 provides a ligand contact to Zn(2+). Residues C581, C584, and C589 each contribute to the [4Fe-4S] cluster site.

The protein belongs to the ThiC family. As to quaternary structure, homodimer. It depends on [4Fe-4S] cluster as a cofactor.

The catalysed reaction is 5-amino-1-(5-phospho-beta-D-ribosyl)imidazole + S-adenosyl-L-methionine = 4-amino-2-methyl-5-(phosphooxymethyl)pyrimidine + CO + 5'-deoxyadenosine + formate + L-methionine + 3 H(+). It participates in cofactor biosynthesis; thiamine diphosphate biosynthesis. In terms of biological role, catalyzes the synthesis of the hydroxymethylpyrimidine phosphate (HMP-P) moiety of thiamine from aminoimidazole ribotide (AIR) in a radical S-adenosyl-L-methionine (SAM)-dependent reaction. This chain is Phosphomethylpyrimidine synthase, found in Citrobacter koseri (strain ATCC BAA-895 / CDC 4225-83 / SGSC4696).